A 326-amino-acid chain; its full sequence is Target of rapamycin complex subunit lst8 (326 aa).

WD repeat units lie at residues 1–37, 40–80, 83–122, 126–165, 168–207, 218–257, and 268–309; these read MNSNQGTVGSDPVILATAGYDHTVRFWQAHSGICTRT, HQDS…PVIN, GVSKNITSVGFHEDGRWMYTGGEDCMARIWDLRSRNLQCQ, QVNAPINCVFLHPNQAELIVGDQSGAIHIWDLKTDQNEQL, ETDVSINSVHIDPDASYMAAVNSSGNCFVWNLTGGLGEDL, AHKRCALKCKFSPDSTLLATCSADQTCKIWRTSNFSLMTE, and TSRG…REYS.

The protein belongs to the WD repeat LST8 family. Part of the mechanistic target of rapamycin complex 1 (mTORC1) which contains MTOR, MLST8 and RPTOR. Component of the mechanistic target of rapamycin complex 2 (mTORC2), consisting in two heterotretramers composed of MTOR, MLST8, RICTOR and MAPKAP1/SIN1.

It is found in the lysosome membrane. It localises to the cytoplasm. Its function is as follows. Subunit of both mTORC1 and mTORC2, which regulates cell growth and survival in response to nutrient and hormonal signals. mTORC1 is activated in response to growth factors or amino acids. In response to nutrients, mTORC1 is recruited to the lysosome membrane and promotes protein, lipid and nucleotide synthesis by phosphorylating several substrates, such as ribosomal protein S6 kinase (RPS6KB1 and RPS6KB2) and EIF4EBP1 (4E-BP1). In the same time, it inhibits catabolic pathways by phosphorylating the autophagy initiation components ULK1 and ATG13, as well as transcription factor TFEB, a master regulators of lysosomal biogenesis and autophagy. The mTORC1 complex is inhibited in response to starvation and amino acid depletion. Within mTORC1, MLST8 interacts directly with MTOR and enhances its kinase activity. In nutrient-poor conditions, stabilizes the MTOR-RPTOR interaction and favors RPTOR-mediated inhibition of MTOR activity. As part of the mTORC2 complex, transduces signals from growth factors to pathways involved in proliferation, cytoskeletal organization, lipogenesis and anabolic output. mTORC2 is also activated by growth factors, but seems to be nutrient-insensitive. In response to growth factors, mTORC2 phosphorylates and activates AGC protein kinase family members, including AKT (AKT1, AKT2 and AKT3), PKC (PRKCA, PRKCB and PRKCE) and SGK1. mTORC2 functions upstream of Rho GTPases to regulate the actin cytoskeleton, probably by activating one or more Rho-type guanine nucleotide exchange factors. mTORC2 promotes the serum-induced formation of stress-fibers or F-actin. Within mTORC2, MLST8 acts as a bridge between MAPKAP1/SIN1 and MTOR. The protein is Target of rapamycin complex subunit lst8 (mlst8) of Xenopus tropicalis (Western clawed frog).